The chain runs to 216 residues: Imidazoleglycerol-phosphate dehydratase (216 aa).

Ser-211 is modified (phosphoserine).

It belongs to the imidazoleglycerol-phosphate dehydratase family.

The catalysed reaction is D-erythro-1-(imidazol-4-yl)glycerol 3-phosphate = 3-(imidazol-4-yl)-2-oxopropyl phosphate + H2O. The protein operates within amino-acid biosynthesis; L-histidine biosynthesis; L-histidine from 5-phospho-alpha-D-ribose 1-diphosphate: step 6/9. The chain is Imidazoleglycerol-phosphate dehydratase (his5) from Schizosaccharomyces pombe (strain 972 / ATCC 24843) (Fission yeast).